The chain runs to 469 residues: Pentatricopeptide repeat-containing protein At2g34370, mitochondrial (469 aa).

The transit peptide at 1–65 directs the protein to the mitochondrion; sequence MVRLVCSRIL…QNRSFVQCRR (65 aa). 4 PPR repeats span residues 142 to 172, 173 to 207, 208 to 238, and 244 to 274; these read DARS…MPKR, NSET…GNKP, DKEI…MYRD, and SMED…MTVE. Residues 375-469 are type DYW motif; the sequence is DIGFVPATRV…NGVCSCKDYW (95 aa).

It belongs to the PPR family. PCMP-H subfamily.

Its subcellular location is the mitochondrion. The chain is Pentatricopeptide repeat-containing protein At2g34370, mitochondrial (PCMP-H25) from Arabidopsis thaliana (Mouse-ear cress).